A 139-amino-acid chain; its full sequence is Protein Turandot B (139 aa).

The signal sequence occupies residues 1–21; sequence MNFKTALICFALLLIGTLCSA.

It belongs to the Turandot family.

The protein resides in the secreted. A humoral factor that may play a role in stress tolerance. The sequence is that of Protein Turandot B from Drosophila simulans (Fruit fly).